The sequence spans 380 residues: Putative glutamate--cysteine ligase 2-1 (380 aa).

Belongs to the glutamate--cysteine ligase type 2 family. YbdK subfamily.

The enzyme catalyses L-cysteine + L-glutamate + ATP = gamma-L-glutamyl-L-cysteine + ADP + phosphate + H(+). Functionally, ATP-dependent carboxylate-amine ligase which exhibits weak glutamate--cysteine ligase activity. The protein is Putative glutamate--cysteine ligase 2-1 of Mycolicibacterium vanbaalenii (strain DSM 7251 / JCM 13017 / BCRC 16820 / KCTC 9966 / NRRL B-24157 / PYR-1) (Mycobacterium vanbaalenii).